The primary structure comprises 269 residues: Undecaprenyl-diphosphatase (269 aa).

8 helical membrane passes run 4-24 (IELW…WLPI), 50-70 (LWLH…PYWL), 86-106 (LFAI…YKVL), 113-133 (ATGD…GLLL), 146-166 (VNVV…IPGI), 186-206 (AVWL…ALEL), 220-240 (WMVT…EVLL), and 246-266 (LDFS…PLAA).

This sequence belongs to the UppP family.

Its subcellular location is the cell membrane. It catalyses the reaction di-trans,octa-cis-undecaprenyl diphosphate + H2O = di-trans,octa-cis-undecaprenyl phosphate + phosphate + H(+). Catalyzes the dephosphorylation of undecaprenyl diphosphate (UPP). The chain is Undecaprenyl-diphosphatase from Methanopyrus kandleri (strain AV19 / DSM 6324 / JCM 9639 / NBRC 100938).